Reading from the N-terminus, the 820-residue chain is SART-1 family protein DOT2 (820 aa).

3 stretches are compositionally biased toward basic and acidic residues: residues 1–156, 210–219, and 426–445; these read MEVE…DNRG, EEKRNAEKQR, and LGSRKDGRRQAMKEEKERIE. Disordered regions lie at residues 1–177, 210–248, 420–445, 523–544, 564–617, 657–678, 729–748, and 762–820; these read MEVE…SALD, EEKRNAEKQRAQQLSRIFEEQDNLNQGENEDGEDGEHLS, GLGAEDLGSRKDGRRQAMKEEKERIE, SSTNQTTDDNTTTGDETQENTV, KPES…PDEN, KLVGIVDDDGGKESKDKESKDR, KLKQMKNSDTPSQSVQRMRE, and GHVK…RPKP. Position 22 is a phosphoserine (Ser-22). Coiled-coil stretches lie at residues 58–120, 171–235, and 433–510; these read RDKE…EKEK, KEAS…NLNQ, and RRQA…KEEA. Residues 525 to 543 show a composition bias toward low complexity; the sequence is TNQTTDDNTTTGDETQENT. A compositionally biased stretch (basic and acidic residues) spans 582–591; sequence VEVKEEHPDG. The span at 596 to 606 shows a compositional bias: acidic residues; it reads NDTDMDAAEDS. Basic and acidic residues-rich tracts occupy residues 607 to 617 and 665 to 678; these read SDTKEITPDEN and DGGKESKDKESKDR. 2 stretches are compositionally biased toward polar residues: residues 733–744 and 767–776; these read MKNSDTPSQSVQ and GQTSDPQSGF. A compositionally biased stretch (basic and acidic residues) spans 792–807; that stretch reads GDRKVEHFLGIKRKSE.

It belongs to the SNU66/SART1 family. As to expression, expressed in lateral root cap, columella, meristem and quiescent center (QC). Expressed in young leaves.

Its subcellular location is the nucleus. Functionally, plays a role in root, shoot and flower development. Probably required for normal root and shoot meristem organization and maintenance and the proper expression of PIN and PLT genes. Involved in leaf vasculature patterning. The sequence is that of SART-1 family protein DOT2 from Arabidopsis thaliana (Mouse-ear cress).